We begin with the raw amino-acid sequence, 429 residues long: UDP-N-acetylglucosamine 1-carboxyvinyltransferase (429 aa).

22–23 (KN) lines the phosphoenolpyruvate pocket. UDP-N-acetyl-alpha-D-glucosamine is bound at residue Arg102. Cys126 acts as the Proton donor in catalysis. Cys126 carries the post-translational modification 2-(S-cysteinyl)pyruvic acid O-phosphothioketal. UDP-N-acetyl-alpha-D-glucosamine-binding positions include 131 to 135 (RPVDL), Asp316, and Ile338.

The protein belongs to the EPSP synthase family. MurA subfamily.

The protein resides in the cytoplasm. It catalyses the reaction phosphoenolpyruvate + UDP-N-acetyl-alpha-D-glucosamine = UDP-N-acetyl-3-O-(1-carboxyvinyl)-alpha-D-glucosamine + phosphate. It functions in the pathway cell wall biogenesis; peptidoglycan biosynthesis. Its function is as follows. Cell wall formation. Adds enolpyruvyl to UDP-N-acetylglucosamine. The chain is UDP-N-acetylglucosamine 1-carboxyvinyltransferase from Rhodopseudomonas palustris (strain BisB5).